A 150-amino-acid chain; its full sequence is Putative pre-16S rRNA nuclease (150 aa).

It belongs to the YqgF nuclease family.

The protein resides in the cytoplasm. Its function is as follows. Could be a nuclease involved in processing of the 5'-end of pre-16S rRNA. In Chlamydia abortus (strain DSM 27085 / S26/3) (Chlamydophila abortus), this protein is Putative pre-16S rRNA nuclease.